Consider the following 209-residue polypeptide: uncharacterized protein (209 aa).

This is an uncharacterized protein from Caldicellulosiruptor saccharolyticus (Caldocellum saccharolyticum).